The sequence spans 507 residues: ATP synthase subunit alpha (507 aa).

Residue 170–177 (GDRQTGKT) participates in ATP binding.

Belongs to the ATPase alpha/beta chains family. F-type ATPases have 2 components, CF(1) - the catalytic core - and CF(0) - the membrane proton channel. CF(1) has five subunits: alpha(3), beta(3), gamma(1), delta(1), epsilon(1). CF(0) has three main subunits: a(1), b(2) and c(9-12). The alpha and beta chains form an alternating ring which encloses part of the gamma chain. CF(1) is attached to CF(0) by a central stalk formed by the gamma and epsilon chains, while a peripheral stalk is formed by the delta and b chains.

It localises to the cell inner membrane. The catalysed reaction is ATP + H2O + 4 H(+)(in) = ADP + phosphate + 5 H(+)(out). Produces ATP from ADP in the presence of a proton gradient across the membrane. The alpha chain is a regulatory subunit. The sequence is that of ATP synthase subunit alpha from Thermosipho africanus (strain TCF52B).